Here is a 644-residue protein sequence, read N- to C-terminus: 3D-(3,5/4)-trihydroxycyclohexane-1,2-dione hydrolase 1 (644 aa).

Glu-65 is a thiamine diphosphate binding site. The interval 442-522 (SLPGDLQRMW…INVLLFDNSG (81 aa)) is thiamine pyrophosphate binding. Residues Asp-493 and Asn-520 each coordinate Mg(2+).

It belongs to the TPP enzyme family. The cofactor is Mg(2+). Thiamine diphosphate is required as a cofactor.

The catalysed reaction is 3D-3,5/4-trihydroxycyclohexane-1,2-dione + H2O = 5-deoxy-D-glucuronate + H(+). The protein operates within polyol metabolism; myo-inositol degradation into acetyl-CoA; acetyl-CoA from myo-inositol: step 3/7. Its function is as follows. Involved in the cleavage of the C1-C2 bond of 3D-(3,5/4)-trihydroxycyclohexane-1,2-dione (THcHDO) to yield 5-deoxy-glucuronate (5DG). The protein is 3D-(3,5/4)-trihydroxycyclohexane-1,2-dione hydrolase 1 of Bacillus cereus (strain ZK / E33L).